Here is a 77-residue protein sequence, read N- to C-terminus: Small ribosomal subunit protein bS21 (77 aa).

Over residues 38 to 52 (KPSEKRAREKAEAVR) the composition is skewed to basic and acidic residues. The interval 38–77 (KPSEKRAREKAEAVRRTRKLARKRAQREGLISNGRGSPLK) is disordered. Positions 53 to 62 (RTRKLARKRA) are enriched in basic residues.

This sequence belongs to the bacterial ribosomal protein bS21 family.

The polypeptide is Small ribosomal subunit protein bS21 (Bartonella henselae (strain ATCC 49882 / DSM 28221 / CCUG 30454 / Houston 1) (Rochalimaea henselae)).